A 613-amino-acid polypeptide reads, in one-letter code: Spastin (613 aa).

The interval 1-42 is disordered; that stretch reads MNSPGGRGKKKGSAGSSSAPPAAGASPSAPSGPAPPAPPAGA. Over 1–61 the chain is Cytoplasmic; it reads MNSPGGRGKK…KRNLYYFSYP (61 aa). Low complexity predominate over residues 13–29; that stretch reads SAGSSSAPPAAGASPSA. Positions 30–39 are enriched in pro residues; the sequence is PSGPAPPAPP. The helical intramembrane region spans 62–82; sequence LFAAFALLRFVAFQLGLLVAW. Over 83–613 the chain is Cytoplasmic; that stretch reads LCERLSRGAL…WNKDFGDTTV (531 aa). The MIT domain occupies 117-192; the sequence is HKRAFECISM…AMAKDRLQLL (76 aa). Residues 224–312 form a disordered region; it reads SESGAVPKKK…PAARKKKDTK (89 aa). Composition is skewed to polar residues over residues 237-257, 264-274, and 281-299; these read THTS…STGL, PSYSGISTASV, and PATS…NKPS. 379–386 is an ATP binding site; it reads GPPGNGKT.

It belongs to the AAA ATPase family. Spastin subfamily. Homohexamer. The homohexamer is stabilized by ATP-binding. The homohexamer may adopt a ring conformation through which microtubules pass prior to being severed. Interacts with microtubules.

It is found in the membrane. It localises to the cytoplasm. The protein localises to the cytoskeleton. The protein resides in the microtubule organizing center. Its subcellular location is the centrosome. It is found in the perinuclear region. It localises to the nucleus. It catalyses the reaction n ATP + n H2O + a microtubule = n ADP + n phosphate + (n+1) alpha/beta tubulin heterodimers.. In terms of biological role, ATP-dependent microtubule severing protein that specifically recognizes and cuts microtubules that are polyglutamylated. Preferentially recognizes and acts on microtubules decorated with short polyglutamate tails: severing activity increases as the number of glutamates per tubulin rises from one to eight, but decreases beyond this glutamylation threshold. Microtubule severing promotes reorganization of cellular microtubule arrays and the release of microtubules from the centrosome following nucleation. Required for membrane traffic from the endoplasmic reticulum (ER) to the Golgi and for completion of the abscission stage of cytokinesis. Also plays a role in axon growth and the formation of axonal branches. The polypeptide is Spastin (Gallus gallus (Chicken)).